The sequence spans 452 residues: MSTAVLENPGLGRKLSDFGQETSYIEDNCNQNGAISLIFSLKEEVGALAKVLRLFEENDVNLTHIESRPSRLKKDEYEFFTHLDKRSLPALTNIIKILRHDIGATVHELSRDKKKDTVPWFPRTIQELDRFANQILSYGAELDADHPGFKDPVYRARRKQFADIAYNYRHGQPIPRVEYMEEEKKTWGTVFKTLKSLYKTHACYEYNHIFPLLEKYCGFHEDNIPQLEDVSQFLQTCTGFRLRPVAGLLSSRDFLGGLAFRVFHCTQYIRHGSKPMYTPEPDICHELLGHVPLFSDRSFAQFSQEIGLASLGAPDEYIEKLATIYWFTVEFGLCKQGDSIKAYGAGLLSSFGELQYCLSEKPKLLPLELEKTAIQNYTVTEFQPLYYVAESFNDAKEKVRNFAATIPRPFSVRYDPYTQRIEVLDNTQQLKILADSINSEIGILCSALQKIK.

Ser16 carries the phosphoserine; by PKA modification. One can recognise an ACT domain in the interval 36–114; sequence SLIFSLKEEV…TVHELSRDKK (79 aa). Fe cation is bound by residues His285, His290, and Glu330.

It belongs to the biopterin-dependent aromatic amino acid hydroxylase family. Homodimer and homotetramer. It depends on Fe(2+) as a cofactor. Phosphorylation at Ser-16 increases basal activity and facilitates activation by the substrate phenylalanine.

It catalyses the reaction (6R)-L-erythro-5,6,7,8-tetrahydrobiopterin + L-phenylalanine + O2 = (4aS,6R)-4a-hydroxy-L-erythro-5,6,7,8-tetrahydrobiopterin + L-tyrosine. The protein operates within amino-acid degradation; L-phenylalanine degradation; acetoacetate and fumarate from L-phenylalanine: step 1/6. Its activity is regulated as follows. N-terminal region of PAH is thought to contain allosteric binding sites for phenylalanine and to constitute an 'inhibitory' domain that regulates the activity of a catalytic domain in the C-terminal portion of the molecule. Its function is as follows. Catalyzes the hydroxylation of L-phenylalanine to L-tyrosine. This Homo sapiens (Human) protein is Phenylalanine-4-hydroxylase (PAH).